The primary structure comprises 358 residues: Heat-inducible transcription repressor HrcA (358 aa).

This sequence belongs to the HrcA family.

Functionally, negative regulator of class I heat shock genes (grpE-dnaK-dnaJ and groELS operons). Prevents heat-shock induction of these operons. The polypeptide is Heat-inducible transcription repressor HrcA (Caulobacter vibrioides (strain NA1000 / CB15N) (Caulobacter crescentus)).